The chain runs to 721 residues: Teichoic acid poly(glycerol phosphate) polymerase (721 aa).

Residues 443-447, Arg-511, 545-546, 582-584, 624-625, and Asp-629 each bind CDP-glycerol; these read WHGTP, PT, RMH, and SS.

Belongs to the CDP-glycerol glycerophosphotransferase family.

Its subcellular location is the cell membrane. It carries out the reaction 4-O-[(2R)-glycerylphospho]-N-acetyl-beta-D-mannosaminyl-(1-&gt;4)-N-acetyl-alpha-D-glucosaminyl di-trans,octa-cis-undecaprenyl diphosphate + n CDP-glycerol = 4-O-{[(2R)-1-glycerylphospho](n)-(2R)-1-glycerylphospho}-N-acetyl-beta-D-mannosaminyl-(1-&gt;4)-N-acetyl-alpha-D-glucosaminyl undecaprenyl diphosphate + n CMP + n H(+). The protein operates within cell wall biogenesis; poly(glycerol phosphate) teichoic acid biosynthesis. Functionally, responsible for the polymerization of the main chain of the major teichoic acid by sequential transfer of glycerol phosphate units from CDP-glycerol to the disaccharide linkage unit. Synthesizes polymers of approximately 35 glycerol phosphate units in length. This chain is Teichoic acid poly(glycerol phosphate) polymerase, found in Staphylococcus epidermidis (strain ATCC 35984 / DSM 28319 / BCRC 17069 / CCUG 31568 / BM 3577 / RP62A).